Consider the following 225-residue polypeptide: Enolase-phosphatase E1 (225 aa).

This sequence belongs to the HAD-like hydrolase superfamily. MasA/MtnC family. Monomer. Mg(2+) serves as cofactor.

The catalysed reaction is 5-methylsulfanyl-2,3-dioxopentyl phosphate + H2O = 1,2-dihydroxy-5-(methylsulfanyl)pent-1-en-3-one + phosphate. It functions in the pathway amino-acid biosynthesis; L-methionine biosynthesis via salvage pathway; L-methionine from S-methyl-5-thio-alpha-D-ribose 1-phosphate: step 3/6. The protein operates within amino-acid biosynthesis; L-methionine biosynthesis via salvage pathway; L-methionine from S-methyl-5-thio-alpha-D-ribose 1-phosphate: step 4/6. Its function is as follows. Bifunctional enzyme that catalyzes the enolization of 2,3-diketo-5-methylthiopentyl-1-phosphate (DK-MTP-1-P) into the intermediate 2-hydroxy-3-keto-5-methylthiopentenyl-1-phosphate (HK-MTPenyl-1-P), which is then dephosphorylated to form the acireductone 1,2-dihydroxy-3-keto-5-methylthiopentene (DHK-MTPene). The sequence is that of Enolase-phosphatase E1 from Pseudomonas aeruginosa (strain LESB58).